Consider the following 399-residue polypeptide: MRVTVSIIKADVGGFPGHAHVHPKMLEYAAAKLKEAQKRGVIIDYFVYNVGDDISLLMTHTKGEDNKDIHGLAWETFKEVTDQIAKRFKLYGAGQDLLKDAFSGNIRGMGPQVAEMEFEERPSEPIIAFAADKTEPGAFNLPLYKMFADPFTTAGLVIDPSMHEGFIFEVLDVVEHKVYLLKTPEDAYSLLGLIGTTGRYIIRKVFRRADGAPAAANSVERLSLIAGRYVGKDDPVLLVRAQSGLPAVGEVLEAFAHPHLVHGWMRGSHAGPLMPARFISVDPERRIAIGPKMTRFDGPPKVGALGFQLHEGYLEGGVDLFDDPAFDYVRQTAAQIADYIRRMGPFQPHRLPPEEMEYTALPKILAKVKPYPADQYEKDRKKYIEAVVKGAKVEESQHD.

Residue D11 is the Proton acceptor; for FBP phosphatase activity of the active site. Mg(2+) is bound by residues D11, H18, D52, and D53. H18 contacts beta-D-fructose 1,6-bisphosphate. H18 contacts dihydroxyacetone phosphate. Y91 is a binding site for beta-D-fructose 1,6-bisphosphate. Q95 is a Mg(2+) binding site. 104 to 105 contacts beta-D-fructose 1,6-bisphosphate; that stretch reads GN. Residue D132 participates in Mg(2+) binding. Position 133 (K133) interacts with beta-D-fructose 1,6-bisphosphate. Residue K133 participates in dihydroxyacetone phosphate binding. Y229 serves as the catalytic Proton donor/acceptor; for FBP aldolase activity. Positions 232, 233, and 234 each coordinate Mg(2+). K232 (schiff-base intermediate with DHAP; for FBP aldolase activity) is an active-site residue. Beta-D-fructose 1,6-bisphosphate-binding positions include 242-243, R266, D297, and Y358; that span reads QS. Residues R266 and D297 each coordinate dihydroxyacetone phosphate.

Belongs to the FBP aldolase/phosphatase family. Homooctamer; dimer of tetramers. It depends on Mg(2+) as a cofactor.

It catalyses the reaction beta-D-fructose 1,6-bisphosphate + H2O = beta-D-fructose 6-phosphate + phosphate. It carries out the reaction beta-D-fructose 1,6-bisphosphate = D-glyceraldehyde 3-phosphate + dihydroxyacetone phosphate. The protein operates within carbohydrate biosynthesis; gluconeogenesis. Catalyzes two subsequent steps in gluconeogenesis: the aldol condensation of dihydroxyacetone phosphate (DHAP) and glyceraldehyde-3-phosphate (GA3P) to fructose-1,6-bisphosphate (FBP), and the dephosphorylation of FBP to fructose-6-phosphate (F6P). This Pyrobaculum neutrophilum (strain DSM 2338 / JCM 9278 / NBRC 100436 / V24Sta) (Thermoproteus neutrophilus) protein is Fructose-1,6-bisphosphate aldolase/phosphatase.